Reading from the N-terminus, the 334-residue chain is Tryptophan--tRNA ligase (334 aa).

ATP-binding positions include 11–13 and 19–20; these read QPS and GN. The short motif at 12–20 is the 'HIGH' region element; the sequence is PSGELTIGN. Aspartate 135 serves as a coordination point for L-tryptophan. ATP contacts are provided by residues 147 to 149, valine 186, and 195 to 199; these read GED and KMSKS. The 'KMSKS' region signature appears at 195–199; the sequence is KMSKS.

The protein belongs to the class-I aminoacyl-tRNA synthetase family. Homodimer.

It is found in the cytoplasm. The enzyme catalyses tRNA(Trp) + L-tryptophan + ATP = L-tryptophyl-tRNA(Trp) + AMP + diphosphate + H(+). Catalyzes the attachment of tryptophan to tRNA(Trp). The chain is Tryptophan--tRNA ligase from Salmonella typhi.